The sequence spans 1038 residues: Eukaryotic translation initiation factor 3 subunit A (1038 aa).

Residues 92 to 121 (LKKFIELAEKKVTEAQAKADEIQSSLESAA) are a coiled coil. One can recognise a PCI domain in the interval 339-523 (MTKAVSFVLL…GVLTFDTDVF (185 aa)). Residues 611–899 (IDKKKEAATD…QKQREEEAEA (289 aa)) adopt a coiled-coil conformation. Composition is skewed to basic and acidic residues over residues 621–632 (ALQRKQREEETR) and 800–901 (RHEE…EARR). Disordered stretches follow at residues 621 to 641 (ALQR…QQLQ) and 800 to 1038 (RHEE…QQGQ). Low complexity-rich tracts occupy residues 943–952 (KEAAGGAAPE) and 976–993 (GASA…AAPS). Residues 1002–1019 (DSGSSTPPSRTQTPATTS) show a composition bias toward polar residues.

This sequence belongs to the eIF-3 subunit A family. As to quaternary structure, component of the eukaryotic translation initiation factor 3 (eIF-3) complex.

It is found in the cytoplasm. In terms of biological role, RNA-binding component of the eukaryotic translation initiation factor 3 (eIF-3) complex, which is involved in protein synthesis of a specialized repertoire of mRNAs and, together with other initiation factors, stimulates binding of mRNA and methionyl-tRNAi to the 40S ribosome. The eIF-3 complex specifically targets and initiates translation of a subset of mRNAs involved in cell proliferation. This Aspergillus oryzae (strain ATCC 42149 / RIB 40) (Yellow koji mold) protein is Eukaryotic translation initiation factor 3 subunit A (tif32).